The chain runs to 343 residues: Holliday junction branch migration complex subunit RuvB (343 aa).

Residues 4–193 (TDNLTAAQPQ…FGIVSRLEFY (190 aa)) are large ATPase domain (RuvB-L). ATP-binding positions include leucine 32, arginine 33, glycine 74, lysine 77, threonine 78, threonine 79, 140–142 (EDY), arginine 183, tyrosine 193, and arginine 230. Threonine 78 contacts Mg(2+). The tract at residues 194 to 264 (ENRDLTTIVS…VADAALSMLD (71 aa)) is small ATPAse domain (RuvB-S). The tract at residues 267–343 (AQGLDVMDRK…YLHFGLPVEK (77 aa)) is head domain (RuvB-H). DNA contacts are provided by arginine 322 and arginine 327.

This sequence belongs to the RuvB family. Homohexamer. Forms an RuvA(8)-RuvB(12)-Holliday junction (HJ) complex. HJ DNA is sandwiched between 2 RuvA tetramers; dsDNA enters through RuvA and exits via RuvB. An RuvB hexamer assembles on each DNA strand where it exits the tetramer. Each RuvB hexamer is contacted by two RuvA subunits (via domain III) on 2 adjacent RuvB subunits; this complex drives branch migration. In the full resolvosome a probable DNA-RuvA(4)-RuvB(12)-RuvC(2) complex forms which resolves the HJ.

It is found in the cytoplasm. It catalyses the reaction ATP + H2O = ADP + phosphate + H(+). Functionally, the RuvA-RuvB-RuvC complex processes Holliday junction (HJ) DNA during genetic recombination and DNA repair, while the RuvA-RuvB complex plays an important role in the rescue of blocked DNA replication forks via replication fork reversal (RFR). RuvA specifically binds to HJ cruciform DNA, conferring on it an open structure. The RuvB hexamer acts as an ATP-dependent pump, pulling dsDNA into and through the RuvAB complex. RuvB forms 2 homohexamers on either side of HJ DNA bound by 1 or 2 RuvA tetramers; 4 subunits per hexamer contact DNA at a time. Coordinated motions by a converter formed by DNA-disengaged RuvB subunits stimulates ATP hydrolysis and nucleotide exchange. Immobilization of the converter enables RuvB to convert the ATP-contained energy into a lever motion, pulling 2 nucleotides of DNA out of the RuvA tetramer per ATP hydrolyzed, thus driving DNA branch migration. The RuvB motors rotate together with the DNA substrate, which together with the progressing nucleotide cycle form the mechanistic basis for DNA recombination by continuous HJ branch migration. Branch migration allows RuvC to scan DNA until it finds its consensus sequence, where it cleaves and resolves cruciform DNA. This Neisseria gonorrhoeae (strain NCCP11945) protein is Holliday junction branch migration complex subunit RuvB.